We begin with the raw amino-acid sequence, 98 residues long: Alpha-elicitin DRE-alpha (98 aa).

3 disulfide bridges follow: cysteine 3-cysteine 71, cysteine 27-cysteine 56, and cysteine 51-cysteine 95.

This sequence belongs to the elicitin family.

Its subcellular location is the secreted. In terms of biological role, induces local and distal defense responses (incompatible hypersensitive reaction) in plants from the solanaceae and cruciferae families. Elicits leaf necrosis and causes the accumulation of pathogenesis-related proteins. Might interact with the lipidic molecules of the plasma membrane. The polypeptide is Alpha-elicitin DRE-alpha (Phytophthora drechsleri).